Here is a 272-residue protein sequence, read N- to C-terminus: Indole-3-glycerol phosphate synthase (272 aa).

This sequence belongs to the TrpC family.

It carries out the reaction 1-(2-carboxyphenylamino)-1-deoxy-D-ribulose 5-phosphate + H(+) = (1S,2R)-1-C-(indol-3-yl)glycerol 3-phosphate + CO2 + H2O. It participates in amino-acid biosynthesis; L-tryptophan biosynthesis; L-tryptophan from chorismate: step 4/5. This is Indole-3-glycerol phosphate synthase from Paenarthrobacter aurescens (strain TC1).